The following is a 103-amino-acid chain: uncharacterized protein (103 aa).

A helical transmembrane segment spans residues 35 to 57; it reads PFVSMFQTFLEVLTATVLAFTAY.

It is found in the host membrane. This is an uncharacterized protein from Acidianus bottle-shaped virus (isolate Italy/Pozzuoli) (ABV).